The sequence spans 302 residues: MAFAKAQKTKAYFKRYQVKFKRRREGKTDYRARIRLINQDKNKYNTPKYRFVVRTSNKDITAQIISASIAGDLVLASAYSHELPQYGLEVGLTNYAAAYCTGLLLARRVLKMLEMDAEYEGNVEATGEDYSVEPADTRRPFRALLDVGLIRTTTGNRVFGALKGALDGGLDIPHSDKRFAGYAKNGQQLDVEVHRKYIFGGHVAAYMRTLMEDEPEKYQSHFSEYIKKGIEADELEGLYKKVHAAIRANPIAKKSDKPQPKAHKRYNLKKLTYDERKARLVERLNALNSAADGDDDDDEDDE.

This sequence belongs to the universal ribosomal protein uL18 family. As to quaternary structure, component of the large ribosomal subunit (LSU).

It is found in the cytoplasm. The protein localises to the nucleus. Its function is as follows. Component of the ribosome, a large ribonucleoprotein complex responsible for the synthesis of proteins in the cell. The small ribosomal subunit (SSU) binds messenger RNAs (mRNAs) and translates the encoded message by selecting cognate aminoacyl-transfer RNA (tRNA) molecules. The large subunit (LSU) contains the ribosomal catalytic site termed the peptidyl transferase center (PTC), which catalyzes the formation of peptide bonds, thereby polymerizing the amino acids delivered by tRNAs into a polypeptide chain. The nascent polypeptides leave the ribosome through a tunnel in the LSU and interact with protein factors that function in enzymatic processing, targeting, and the membrane insertion of nascent chains at the exit of the ribosomal tunnel. In Cucumis sativus (Cucumber), this protein is Large ribosomal subunit protein uL18 (RPL5).